We begin with the raw amino-acid sequence, 737 residues long: Protein penguin (737 aa).

Residues 1-128 (MVSSEPKGPA…EKKDLKLKRK (128 aa)) are disordered. Composition is skewed to basic and acidic residues over residues 76 to 89 (KKFDKSGATGDKRL) and 107 to 122 (EGEKQDWNKFKKEKKD). The PUM-HD domain occupies 139 to 490 (EANQIHEKLR…EILEQIEAPI (352 aa)). Pumilio repeat units follow at residues 167 to 202 (NVGDTISKVVKAHDTARVIQSMLKYASPALRAEISE), 203 to 238 (KLLPFTVEMCQSKYAQFCVQRMLKYGAPATKAKLVD), 239 to 274 (SLYGHIVRLAGHSIGSGLLDSMYQSATPNQRIYMRQ), 388 to 425 (NIKEHLLKIANHEHGHVFLISLLNALDDTKATKKAIYD), and 426 to 462 (HLHGDLKALMSSPYGRRVIQWLVAPGDTTCFHPEFIR). A disordered region spans residues 577 to 638 (VESSSDDEDE…EEEPAAPLVS (62 aa)). Over residues 580–600 (SSDDEDEDEDEDEESDDEGDE) the composition is skewed to acidic residues. Residues 601-615 (KEQKEAAADDAEPKV) show a composition bias toward basic and acidic residues. The span at 616 to 626 (KKAKKEPKKPK) shows a compositional bias: basic residues.

The sequence is that of Protein penguin from Drosophila melanogaster (Fruit fly).